Reading from the N-terminus, the 278-residue chain is NAD kinase (278 aa).

Residue Asp-56 is the Proton acceptor of the active site. NAD(+) contacts are provided by residues 56-57 (DG), 132-133 (NE), Arg-158, Asp-160, and 171-176 (TAYNKS).

Belongs to the NAD kinase family. The cofactor is a divalent metal cation.

It localises to the cytoplasm. It catalyses the reaction NAD(+) + ATP = ADP + NADP(+) + H(+). Involved in the regulation of the intracellular balance of NAD and NADP, and is a key enzyme in the biosynthesis of NADP. Catalyzes specifically the phosphorylation on 2'-hydroxyl of the adenosine moiety of NAD to yield NADP. This is NAD kinase from Streptococcus pyogenes serotype M1.